The primary structure comprises 86 residues: Thioredoxin (86 aa).

Residues Cys-15 and Cys-18 each act as nucleophile in the active site. A disulfide bond links Cys-15 and Cys-18.

This sequence belongs to the glutaredoxin family.

Its function is as follows. Does not function as a glutathione-disulfide oxidoreductase in the presence of glutathione and glutathione reductase. Has low thioredoxin activity in vitro. This Methanocaldococcus jannaschii (strain ATCC 43067 / DSM 2661 / JAL-1 / JCM 10045 / NBRC 100440) (Methanococcus jannaschii) protein is Thioredoxin.